The sequence spans 515 residues: ATP synthase subunit alpha (515 aa).

169-176 contributes to the ATP binding site; it reads GDRQTGKT.

It belongs to the ATPase alpha/beta chains family. In terms of assembly, F-type ATPases have 2 components, CF(1) - the catalytic core - and CF(0) - the membrane proton channel. CF(1) has five subunits: alpha(3), beta(3), gamma(1), delta(1), epsilon(1). CF(0) has three main subunits: a(1), b(2) and c(9-12). The alpha and beta chains form an alternating ring which encloses part of the gamma chain. CF(1) is attached to CF(0) by a central stalk formed by the gamma and epsilon chains, while a peripheral stalk is formed by the delta and b chains.

It is found in the cell inner membrane. It carries out the reaction ATP + H2O + 4 H(+)(in) = ADP + phosphate + 5 H(+)(out). Functionally, produces ATP from ADP in the presence of a proton gradient across the membrane. The alpha chain is a regulatory subunit. The polypeptide is ATP synthase subunit alpha (Neisseria meningitidis serogroup C (strain 053442)).